We begin with the raw amino-acid sequence, 149 residues long: Nucleoside diphosphate kinase (149 aa).

Residues Lys-9, Phe-57, Arg-85, Thr-91, Arg-102, and Asn-112 each coordinate ATP. His-115 functions as the Pros-phosphohistidine intermediate in the catalytic mechanism.

It belongs to the NDK family. As to quaternary structure, homotetramer. Requires Mg(2+) as cofactor.

It is found in the cytoplasm. The catalysed reaction is a 2'-deoxyribonucleoside 5'-diphosphate + ATP = a 2'-deoxyribonucleoside 5'-triphosphate + ADP. The enzyme catalyses a ribonucleoside 5'-diphosphate + ATP = a ribonucleoside 5'-triphosphate + ADP. In terms of biological role, major role in the synthesis of nucleoside triphosphates other than ATP. The ATP gamma phosphate is transferred to the NDP beta phosphate via a ping-pong mechanism, using a phosphorylated active-site intermediate. This Pelotomaculum thermopropionicum (strain DSM 13744 / JCM 10971 / SI) protein is Nucleoside diphosphate kinase.